Here is a 199-residue protein sequence, read N- to C-terminus: Shikimate kinase (199 aa).

Residue 34–39 coordinates ATP; it reads GAGKTA. Threonine 38 provides a ligand contact to Mg(2+). Residues aspartate 56, arginine 80, and glycine 102 each contribute to the substrate site. Arginine 140 is a binding site for ATP. Arginine 159 contacts substrate.

This sequence belongs to the shikimate kinase family. Monomer. It depends on Mg(2+) as a cofactor.

Its subcellular location is the cytoplasm. It catalyses the reaction shikimate + ATP = 3-phosphoshikimate + ADP + H(+). It functions in the pathway metabolic intermediate biosynthesis; chorismate biosynthesis; chorismate from D-erythrose 4-phosphate and phosphoenolpyruvate: step 5/7. In terms of biological role, catalyzes the specific phosphorylation of the 3-hydroxyl group of shikimic acid using ATP as a cosubstrate. The sequence is that of Shikimate kinase from Cereibacter sphaeroides (strain ATCC 17023 / DSM 158 / JCM 6121 / CCUG 31486 / LMG 2827 / NBRC 12203 / NCIMB 8253 / ATH 2.4.1.) (Rhodobacter sphaeroides).